Here is a 104-residue protein sequence, read N- to C-terminus: V-type ATP synthase subunit F (104 aa).

This sequence belongs to the V-ATPase F subunit family.

Its function is as follows. Produces ATP from ADP in the presence of a proton gradient across the membrane. This chain is V-type ATP synthase subunit F (atpF), found in Thermus thermophilus (strain ATCC 27634 / DSM 579 / HB8).